Reading from the N-terminus, the 149-residue chain is UPF0178 protein Lmo1456 (149 aa).

Belongs to the UPF0178 family.

The protein is UPF0178 protein Lmo1456 of Listeria monocytogenes serovar 1/2a (strain ATCC BAA-679 / EGD-e).